We begin with the raw amino-acid sequence, 409 residues long: NADH-quinone oxidoreductase subunit D (409 aa).

The protein belongs to the complex I 49 kDa subunit family. As to quaternary structure, NDH-1 is composed of 14 different subunits. Subunits NuoB, C, D, E, F, and G constitute the peripheral sector of the complex.

The protein localises to the cell inner membrane. The catalysed reaction is a quinone + NADH + 5 H(+)(in) = a quinol + NAD(+) + 4 H(+)(out). Its function is as follows. NDH-1 shuttles electrons from NADH, via FMN and iron-sulfur (Fe-S) centers, to quinones in the respiratory chain. The immediate electron acceptor for the enzyme in this species is believed to be ubiquinone. Couples the redox reaction to proton translocation (for every two electrons transferred, four hydrogen ions are translocated across the cytoplasmic membrane), and thus conserves the redox energy in a proton gradient. The protein is NADH-quinone oxidoreductase subunit D of Helicobacter pylori (strain G27).